The primary structure comprises 319 residues: Thioredoxin reductase (319 aa).

FAD-binding positions include 11–14 (SGPA), 40–41 (IA), glutamine 45, asparagine 54, valine 87, cysteine 145, aspartate 288, and 295–297 (RQA). A disulfide bond links cysteine 142 and cysteine 145.

The protein belongs to the class-II pyridine nucleotide-disulfide oxidoreductase family. In terms of assembly, homodimer. It depends on FAD as a cofactor.

The protein localises to the cytoplasm. It carries out the reaction [thioredoxin]-dithiol + NADP(+) = [thioredoxin]-disulfide + NADPH + H(+). This chain is Thioredoxin reductase (TRR1), found in Yarrowia lipolytica (strain CLIB 122 / E 150) (Yeast).